The sequence spans 470 residues: MDRISNLPNEIICHIVSFLSAKEAAFASVLSKRWQNLFTIVQKLEFDDSVKNQGSLMDFVNGVLALPVTTRISKFSLRFDSFLKRKLETGLVIGPHVVNRCLCNVLKRGVLDLKLEIYGEDGYLLPSEVFTCKTIVDLKLTSCIFAESYVIDVIPENAFLPGLESLFLKSIWFSDLRGCAFQTLLSACPVLKTLTIYDVQWEKWKWSRTVSSATLERLIIQRTEFTYFNGSDFKSITFDTPSLTYLKYIDFVPEEYPVVNLDSIVEAKLHLILTGNQDYPVRYLGREDDPITSNPTNLIKGLRNVEILHLSTATAQMLCFFPRETLPEFVNLHHLTIGPTYYECFNWRLLPILLKKTPNLKTLMIKGPLHLYYRDFNDDEEEEEPEYYCECSSGCNCLLSCHMEVLEISHYRGTTKELEKLKHFLGKLSCLEHVKLGVWASSDKEKLSITTDLLMLPRASVNCKIQINFS.

The F-box domain maps to 1-53; that stretch reads MDRISNLPNEIICHIVSFLSAKEAAFASVLSKRWQNLFTIVQKLEFDDSVKNQ. LRR repeat units lie at residues 114–142, 143–170, 173–198, 225–250, 287–312, and 342–367; these read KLEIYGEDGYLLPSEVFTCKTIVDLKLTS, CIFAESYVIDVIPENAFLPGLESLFLKS, FSDLRGCAFQTLLSACPVLKTLTIYD, FTYFNGSDFKSITFDTPSLTYLKYID, EDDPITSNPTNLIKGLRNVEILHLST, and YECFNWRLLPILLKKTPNLKTLMIKG.

In Arabidopsis thaliana (Mouse-ear cress), this protein is Putative F-box/LRR-repeat protein At3g58920.